Here is a 294-residue protein sequence, read N- to C-terminus: tRNA-uridine aminocarboxypropyltransferase 1 (294 aa).

Residues 158 to 185 form a disordered region; it reads DMQNDSSCEPSLKRPKCSQQYDKSKNEG. A DXTW motif is present at residues 202-205; that stretch reads DSTW.

This sequence belongs to the TDD superfamily. DTWD1 family.

It localises to the nucleus. It catalyses the reaction a uridine in tRNA + S-adenosyl-L-methionine = a 3-[(3S)-3-amino-3-carboxypropyl]uridine in tRNA + S-methyl-5'-thioadenosine + H(+). Its function is as follows. Catalyzes the formation of 3-(3-amino-3-carboxypropyl)uridine (acp3U) at position 20 in the D-loop of several cytoplasmic tRNAs (acp3U(20)). This chain is tRNA-uridine aminocarboxypropyltransferase 1, found in Xenopus tropicalis (Western clawed frog).